Consider the following 295-residue polypeptide: GDP-polyphosphate phosphotransferase (295 aa).

Positions 1–28 (MDIPSVDVSTATNDGASSRAKGHRSAAP) are disordered. The span at 7 to 16 (DVSTATNDGA) shows a compositional bias: polar residues. Phosphohistidine is present on residues His-115 and His-247.

It belongs to the polyphosphate kinase 2 (PPK2) family. Class I subfamily. As to quaternary structure, interacts with Ndk. Autophosphorylated at His-115 and His-247 using polyP as a phosphate donor.

It catalyses the reaction [phosphate](n) + GTP = [phosphate](n+1) + GDP. In terms of biological role, uses inorganic polyphosphate (polyP) as a donor to convert GDP to GTP. In addition, modulates nucleotide triphosphate synthesis catalyzed by the nucleoside diphosphate kinase (Ndk) in favor of GTP production over CTP or UTP. Plays an important role in survival of M.tuberculosis in macrophages. In Mycobacterium tuberculosis (strain ATCC 25618 / H37Rv), this protein is GDP-polyphosphate phosphotransferase.